Reading from the N-terminus, the 228-residue chain is Orotate phosphoribosyltransferase (228 aa).

5-phospho-alpha-D-ribose 1-diphosphate-binding positions include Arg107, Lys108, Lys111, and 133–141 (EDLTTDGGS). Residue Thr137 participates in orotate binding.

It belongs to the purine/pyrimidine phosphoribosyltransferase family. PyrE subfamily. In terms of assembly, homodimer. Requires Mg(2+) as cofactor.

It carries out the reaction orotidine 5'-phosphate + diphosphate = orotate + 5-phospho-alpha-D-ribose 1-diphosphate. Its pathway is pyrimidine metabolism; UMP biosynthesis via de novo pathway; UMP from orotate: step 1/2. Its function is as follows. Catalyzes the transfer of a ribosyl phosphate group from 5-phosphoribose 1-diphosphate to orotate, leading to the formation of orotidine monophosphate (OMP). This chain is Orotate phosphoribosyltransferase, found in Jannaschia sp. (strain CCS1).